A 155-amino-acid chain; its full sequence is Ribosome maturation factor RimP (155 aa).

The protein belongs to the RimP family.

It localises to the cytoplasm. Its function is as follows. Required for maturation of 30S ribosomal subunits. The sequence is that of Ribosome maturation factor RimP from Prochlorococcus marinus (strain MIT 9515).